Here is a 672-residue protein sequence, read N- to C-terminus: DNA mismatch repair protein MutL (672 aa).

Residues 443–454 (SYTSDSNQYENS) show a composition bias toward polar residues. A disordered region spans residues 443 to 469 (SYTSDSNQYENSCKSDVDKESKSKTTG). The span at 455–465 (CKSDVDKESKS) shows a compositional bias: basic and acidic residues.

Belongs to the DNA mismatch repair MutL/HexB family.

Functionally, this protein is involved in the repair of mismatches in DNA. It is required for dam-dependent methyl-directed DNA mismatch repair. May act as a 'molecular matchmaker', a protein that promotes the formation of a stable complex between two or more DNA-binding proteins in an ATP-dependent manner without itself being part of a final effector complex. This Clostridium botulinum (strain Eklund 17B / Type B) protein is DNA mismatch repair protein MutL.